Here is a 277-residue protein sequence, read N- to C-terminus: Small ribosomal subunit protein uS2 (277 aa).

2 stretches are compositionally biased toward basic and acidic residues: residues 227–256 and 267–277; these read QARAERQEAAAKEAAGDADKAPAEAERTEA and SEAKAEGNTEA. A disordered region spans residues 227-277; sequence QARAERQEAAAKEAAGDADKAPAEAERTEAPAEEAPAEAQSEAKAEGNTEA.

This sequence belongs to the universal ribosomal protein uS2 family.

This chain is Small ribosomal subunit protein uS2, found in Corynebacterium jeikeium (strain K411).